Reading from the N-terminus, the 64-residue chain is Large ribosomal subunit protein bL35 (64 aa).

Belongs to the bacterial ribosomal protein bL35 family.

This is Large ribosomal subunit protein bL35 from Amoebophilus asiaticus (strain 5a2).